The sequence spans 602 residues: Elongation factor 4 (602 aa).

In terms of domain architecture, tr-type G spans 7 to 189 (SQIRNFSIIA…AIVHRIPPPA (183 aa)). GTP contacts are provided by residues 19 to 24 (DHGKST) and 136 to 139 (NKID).

It belongs to the TRAFAC class translation factor GTPase superfamily. Classic translation factor GTPase family. LepA subfamily.

It localises to the cell inner membrane. It catalyses the reaction GTP + H2O = GDP + phosphate + H(+). Required for accurate and efficient protein synthesis under certain stress conditions. May act as a fidelity factor of the translation reaction, by catalyzing a one-codon backward translocation of tRNAs on improperly translocated ribosomes. Back-translocation proceeds from a post-translocation (POST) complex to a pre-translocation (PRE) complex, thus giving elongation factor G a second chance to translocate the tRNAs correctly. Binds to ribosomes in a GTP-dependent manner. The chain is Elongation factor 4 from Gloeobacter violaceus (strain ATCC 29082 / PCC 7421).